The sequence spans 463 residues: Ammonium transporter 1 (463 aa).

The Extracellular portion of the chain corresponds to 1 to 39 (MVAGEIIKGVAAEITNGSSSSVVQKYLDCANQVAPDPGN). Residues 40–60 (TTWVLLSTILVLGMMPALAFF) traverse the membrane as a helical segment. Residues 61 to 76 (EAGLLRSKNTLSIITQ) lie on the Cytoplasmic side of the membrane. The chain crosses the membrane as a helical span at residues 77–97 (IMSGIVVLTVMWQAFGYSLTF). Residues 98–127 (GPDQKGIIGNLDHAFLINVSYDDCSPNAPN) are Extracellular-facing. Residues 128-148 (IPAAAYAFFMMMFANITPLLM) traverse the membrane as a helical segment. Topologically, residues 149–160 (TGAFAERVKFKA) are cytoplasmic. A helical membrane pass occupies residues 161–181 (FIALTVAWEIIVFYPVAHWIW). Topologically, residues 182 to 194 (GGGWLHKYFGVLD) are extracellular. A helical membrane pass occupies residues 195 to 215 (FAGGIVIHTSAGVSALVIALY). Over 216–233 (VGRRKDFEKYGGEFPPSN) the chain is Cytoplasmic. A helical membrane pass occupies residues 234–254 (LPLATIGAALLWMGWFGFNAG). Over 255–265 (SALAAGNIATS) the chain is Extracellular. A helical transmembrane segment spans residues 266-286 (AVASTQIGGSFSAIVWIILSA). Residues 287-293 (AKGKPNT) are Cytoplasmic-facing. A helical membrane pass occupies residues 294-314 (VSVINGVIAGLAGITPASGYI). Residues 315-316 (NS) are Extracellular-facing. The helical transmembrane segment at 317–337 (QYSIGLGICLGLASYYSVVLL) threads the bilayer. The Cytoplasmic segment spans residues 338–351 (KHKLHIDDALDVSS). A helical membrane pass occupies residues 352 to 372 (VHGLTGIIGSLAIGFCAELSV). Residues 373–392 (NPNGANGAFYGNPKLIGTQL) are Extracellular-facing. Residues 393–413 (LGVVSVAVWAAAWTWVLLKII) traverse the membrane as a helical segment. Over 414–463 (DATIGVKIDESEEELGLDLVEHGEFAYHNISLQGNENHYSSVINSHDFFK) the chain is Cytoplasmic.

The protein belongs to the ammonia transporter channel (TC 1.A.11.2) family.

It localises to the cell membrane. The protein resides in the endosome membrane. It is found in the lysosome membrane. Its subcellular location is the cytoplasmic vesicle. The protein localises to the phagosome membrane. Its function is as follows. Ammonium transporter that mediates the excretion of ammonium. Controls ammonium homeostasis during growth and development. Ammonium has been shown to function as a morphogen at multiple steps during the development. The polypeptide is Ammonium transporter 1 (amtA) (Dictyostelium discoideum (Social amoeba)).